Here is a 281-residue protein sequence, read N- to C-terminus: Spermatogenesis-associated serine-rich protein 1 (281 aa).

Positions 1–14 are enriched in basic and acidic residues; it reads MEAARDAQHSDVLE. The disordered stretch occupies residues 1–92; sequence MEAARDAQHS…SSSAQANRSL (92 aa). Residues 21–37 show a composition bias toward polar residues; the sequence is SRTSSHQNRRASLSSDG. Thr-53 bears the Phosphothreonine mark. Over residues 54–65 the composition is skewed to polar residues; that stretch reads PSDTASGLGQKT. Over residues 66–85 the composition is skewed to low complexity; that stretch reads SSTSSSSSSSSSSSPSSSSS. A phosphoserine mark is found at Ser-71, Ser-74, Ser-77, Ser-78, Ser-79, and Ser-91.

As to expression, detected in pachytene spermatocytes and round spermatids.

The protein is Spermatogenesis-associated serine-rich protein 1 (Spats1) of Rattus norvegicus (Rat).